Reading from the N-terminus, the 890-residue chain is DNA mismatch repair protein MutS (890 aa).

Gly607–Ser614 provides a ligand contact to ATP.

Belongs to the DNA mismatch repair MutS family.

In terms of biological role, this protein is involved in the repair of mismatches in DNA. It is possible that it carries out the mismatch recognition step. This protein has a weak ATPase activity. The protein is DNA mismatch repair protein MutS of Bacillus thuringiensis (strain Al Hakam).